The primary structure comprises 231 residues: ATP-dependent dethiobiotin synthetase BioD 2 (231 aa).

Residue 13 to 18 (SVGKTV) participates in ATP binding. Thr-17 is a Mg(2+) binding site. The active site involves Lys-38. ATP-binding positions include Asp-55, 112–115 (EGTG), 172–173 (NR), 201–203 (PYL), and Gln-208. Mg(2+) is bound by residues Asp-55 and Glu-112.

This sequence belongs to the dethiobiotin synthetase family. Homodimer. Requires Mg(2+) as cofactor.

It localises to the cytoplasm. It catalyses the reaction (7R,8S)-7,8-diammoniononanoate + CO2 + ATP = (4R,5S)-dethiobiotin + ADP + phosphate + 3 H(+). It functions in the pathway cofactor biosynthesis; biotin biosynthesis; biotin from 7,8-diaminononanoate: step 1/2. Functionally, catalyzes a mechanistically unusual reaction, the ATP-dependent insertion of CO2 between the N7 and N8 nitrogen atoms of 7,8-diaminopelargonic acid (DAPA, also called 7,8-diammoniononanoate) to form a ureido ring. The chain is ATP-dependent dethiobiotin synthetase BioD 2 from Salmonella typhi.